The sequence spans 227 residues: Uridylate kinase (227 aa).

ATP is bound at residue 11–12 (GS). Gly45 provides a ligand contact to UMP. ATP contacts are provided by Gly46 and Arg50. UMP is bound by residues Asp67 and 114–120 (TEPGHTT). ATP contacts are provided by Thr140, Tyr146, and Asp149.

The protein belongs to the UMP kinase family. Homohexamer.

It is found in the cytoplasm. It carries out the reaction UMP + ATP = UDP + ADP. Its pathway is pyrimidine metabolism; CTP biosynthesis via de novo pathway; UDP from UMP (UMPK route): step 1/1. Its activity is regulated as follows. Inhibited by UTP. Functionally, catalyzes the reversible phosphorylation of UMP to UDP. This is Uridylate kinase from Thermoplasma volcanium (strain ATCC 51530 / DSM 4299 / JCM 9571 / NBRC 15438 / GSS1).